Consider the following 131-residue polypeptide: uncharacterized protein (131 aa).

A CCHC-type; degenerate zinc finger spans residues 64-81 (VNCDKCGKPGNVKNDCPG).

This is an uncharacterized protein from Homo sapiens (Human).